The sequence spans 333 residues: MIIKQLPLTDLHRHLDGNIRIETILDLGQKFGLDLPAYDIEALRPHVQIVEAEPSLVAFLSKLDWGVAVLGDLDACRRVAYENVQDAMNAQIDYAELRFSPYYMAMKHNLPIAGVVEAVVDGVEAGCRDFGIKANLIGIMSRTFGQDACQQELDGLLTQKNKLVAIDLAGDELGQPGDLFVNHFKQVKDADLRVTVHAGEAAGAASMWQAINELGAVRIGHGVKAIEDPKLMEYLAKNNIGIESCLTSNIQTSTVASFESHPIKTFLEYGVKACLNTDDPAVEGIELPHEYEVAAPKVGLTPEQLKQIQINGLDLAFLSDSEKQALRDIAAKR.

Zn(2+) contacts are provided by H12 and H14. 3 residues coordinate substrate: H14, D16, and G170. H197 serves as a coordination point for Zn(2+). E200 serves as the catalytic Proton donor. Residue D278 participates in Zn(2+) binding. A substrate-binding site is contributed by D279.

This sequence belongs to the metallo-dependent hydrolases superfamily. Adenosine and AMP deaminases family. Adenosine deaminase subfamily. Zn(2+) is required as a cofactor.

The enzyme catalyses adenosine + H2O + H(+) = inosine + NH4(+). It catalyses the reaction 2'-deoxyadenosine + H2O + H(+) = 2'-deoxyinosine + NH4(+). In terms of biological role, catalyzes the hydrolytic deamination of adenosine and 2-deoxyadenosine. This is Adenosine deaminase from Aliivibrio fischeri (strain MJ11) (Vibrio fischeri).